A 480-amino-acid chain; its full sequence is MKRSVAVWLLVGLSLGVPQFGKGDICDPNPCENGGICLPGLADGSFSCECPDGFTDPNCSSVVEVASDEEEPTSAGPCTPNPCHNGGTCEISEAYRGDTFIGYVCKCPRGFNGIHCQHNINECEVEPCKNGGICTDLVANYSCECPGEFMGRNCQYKCSGPLGIEGGIISNQQITASSTHRALFGLQKWYPYYARLNKKGLINAWTAAENDRWPWIQINLQRKMRVTGVITQGAKRIGSPEYIKSYKIAYSNDGKTWAMYKVKGTNEDMVFRGNIDNNTPYANSFTPPIKAQYVRLYPQVCRRHCTLRMELLGCELSGCSEPLGMKSGHIQDYQITASSIFRTLNMDMFTWEPRKARLDKQGKVNAWTSGHNDQSQWLQVDLLVPTKVTGIITQGAKDFGHVQFVGSYKLAYSNDGEHWTVYQDEKQRKDKVFQGNFDNDTHRKNVIDPPIYARHIRILPWSWYGRITLRSELLGCTEEE.

The first 23 residues, 1 to 23 (MKRSVAVWLLVGLSLGVPQFGKG), serve as a signal peptide directing secretion. One can recognise an EGF-like 1 domain in the interval 24–60 (DICDPNPCENGGICLPGLADGSFSCECPDGFTDPNCS). Cystine bridges form between Cys26–Cys37, Cys31–Cys48, and Cys50–Cys59. The O-linked (GalNAc...) threonine glycan is linked to Thr73. EGF-like domains follow at residues 74–117 (SAGP…IHCQ) and 119–155 (NINECEVEPCKNGGICTDLVANYSCECPGEFMGRNCQ). 3 disulfide bridges follow: Cys78–Cys89, Cys83–Cys105, and Cys107–Cys116. O-linked (Fuc...) threonine glycosylation occurs at Thr88. Residues 96–98 (RGD) carry the Cell attachment site motif. Positions 119, 120, and 122 each coordinate Ca(2+). Cystine bridges form between Cys123-Cys134, Cys128-Cys143, Cys145-Cys154, Cys158-Cys314, Cys301-Cys305, and Cys319-Cys476. Ca(2+) contacts are provided by Asp136 and Leu137. N-linked (GlcNAc...) asparagine glycosylation occurs at Asn140. F5/8 type C domains are found at residues 158 to 314 (CSGP…LLGC) and 319 to 476 (CSEP…LLGC).

The protein resides in the secreted. Functionally, promotes adhesion of endothelial cells through interaction with the alpha-v/beta-3 integrin receptor. Inhibits formation of vascular-like structures. May be involved in regulation of vascular morphogenesis of remodeling in embryonic development. This chain is EGF-like repeat and discoidin I-like domain-containing protein 3 (EDIL3), found in Homo sapiens (Human).